A 561-amino-acid polypeptide reads, in one-letter code: Potassium-transporting ATPase potassium-binding subunit (561 aa).

The next 12 helical transmembrane spans lie at 5–25 (LAAGLQIAFVLAVLAIAYVPV), 60–80 (YGYAASVLGFSLASALFLYFL), 86–106 (VLPLSDGLSGVSPAVAFNTAI), 130–150 (VGLAVQNFVSAAVGMAVAIAL), 177–197 (ILLPFSFVIALILLSQGVIQS), 247–267 (PTPLSNIVEILAILLIPVCLT), 281–301 (LTLLAVMGILWSGLLAVTLAA), 324–344 (FGIPGSALFAVATTGTSTGAV), 376–396 (GLYGILVLALIAVFVGGLLVG), 415–435 (ALSILVMPALVLIGTAITVIL), 491–511 (ICMLLGRFLPIIFVLALAGAL), and 533–553 (GLLTGTVVLVAALTFFPALAL).

This sequence belongs to the KdpA family. As to quaternary structure, the system is composed of three essential subunits: KdpA, KdpB and KdpC.

It localises to the cell membrane. Part of the high-affinity ATP-driven potassium transport (or Kdp) system, which catalyzes the hydrolysis of ATP coupled with the electrogenic transport of potassium into the cytoplasm. This subunit binds the extracellular potassium ions and delivers the ions to the membrane domain of KdpB through an intramembrane tunnel. This chain is Potassium-transporting ATPase potassium-binding subunit, found in Rhodococcus erythropolis (strain PR4 / NBRC 100887).